Reading from the N-terminus, the 375-residue chain is Alcohol dehydrogenase 1B (375 aa).

Ser1 carries the post-translational modification N-acetylserine. Zn(2+) contacts are provided by Cys46, His67, Cys97, Cys100, Cys103, Cys111, and Cys174. Residues 199–204 (GLGGVG), Asp223, Lys228, 293–295 (VGV), and Arg370 contribute to the NAD(+) site.

It belongs to the zinc-containing alcohol dehydrogenase family. Class-I subfamily. In terms of assembly, multimeric (with different ratios of monomers). Zn(2+) is required as a cofactor.

It is found in the cytoplasm. The enzyme catalyses a primary alcohol + NAD(+) = an aldehyde + NADH + H(+). The catalysed reaction is a secondary alcohol + NAD(+) = a ketone + NADH + H(+). The protein is Alcohol dehydrogenase 1B of Saara hardwickii (Indian spiny-tailed lizard).